The sequence spans 194 residues: MSRKHHKEQEEIQEQETISAGAAETPAEETAAIPAATEADMDAEISARDAEIQKLREEVMRRAAEFENFRKQKEREAALSGTRMLENIVRELLPLIDDLKRLMSHIPAEMQAMAEAKPFIEGVELIHKNFMSLLERKGVKEIEAKGKMLDVNFHEAITQIDAPGAEPDTIVEEYQTGYTLGDRVIRHAKVIVAK.

The segment at 1-40 is disordered; sequence MSRKHHKEQEEIQEQETISAGAAETPAEETAAIPAATEAD. The segment covering 20–38 has biased composition (low complexity); it reads AGAAETPAEETAAIPAATE.

Belongs to the GrpE family. In terms of assembly, homodimer.

It is found in the cytoplasm. Participates actively in the response to hyperosmotic and heat shock by preventing the aggregation of stress-denatured proteins, in association with DnaK and GrpE. It is the nucleotide exchange factor for DnaK and may function as a thermosensor. Unfolded proteins bind initially to DnaJ; upon interaction with the DnaJ-bound protein, DnaK hydrolyzes its bound ATP, resulting in the formation of a stable complex. GrpE releases ADP from DnaK; ATP binding to DnaK triggers the release of the substrate protein, thus completing the reaction cycle. Several rounds of ATP-dependent interactions between DnaJ, DnaK and GrpE are required for fully efficient folding. The chain is Protein GrpE from Chlorobaculum tepidum (strain ATCC 49652 / DSM 12025 / NBRC 103806 / TLS) (Chlorobium tepidum).